Consider the following 1668-residue polypeptide: Zinc finger CCCH domain-containing protein 13 (1668 aa).

Disordered regions lie at residues 1 to 38 (MSKI…GSTA) and 56 to 157 (TCRF…GDIN). Residues 10 to 23 (VENTKTISDSTSRR) are compositionally biased toward polar residues. A C3H1-type zinc finger spans residues 36-64 (STAETQCRNWLKTGNCLYGNTCRFVHGPS). S64 and S77 each carry phosphoserine. Over residues 76 to 136 (RSPERPTGDL…IKITKERTPE (61 aa)) the composition is skewed to basic and acidic residues. Residues K179 and K194 each participate in a glycyl lysine isopeptide (Lys-Gly) (interchain with G-Cter in SUMO2) cross-link. Disordered regions lie at residues 190–1112 (EIII…TATA) and 1125–1466 (AAAT…PISD). 4 positions are modified to phosphoserine: S198, S207, S209, and S211. A compositionally biased stretch (low complexity) spans 204–213 (SKLSPSPSLR). Positions 214-224 (KSSKSPKRKSS) are enriched in basic residues. A Phosphothreonine modification is found at T237. S238 and S242 each carry phosphoserine. The segment covering 239-254 (AVSSPLLDQQRNSKTN) has biased composition (polar residues). T263 bears the Phosphothreonine mark. S265 bears the Phosphoserine mark. Residues 283–315 (KYKVKDRIEEKTRDGKDRGRDFERQREKRDKPR) show a composition bias toward basic and acidic residues. A phosphoserine mark is found at S316, S318, S325, and S328. A compositionally biased stretch (low complexity) spans 323–346 (HHSPISSRHHSSSSQSGSSIQRHS). 2 positions are modified to phosphothreonine: T354 and T364. Phosphoserine occurs at positions 370, 372, and 381. Over residues 370-382 (SASPYPSHSLSSP) the composition is skewed to low complexity. 2 stretches are compositionally biased toward basic and acidic residues: residues 394-434 (PMRE…REER) and 442-575 (SSRD…EKGS). Low complexity predominate over residues 584 to 593 (DSHSSNSNYH). Over residues 594–640 (DSWETRSSYPERDRYPERDNRDQARDSSFERRHGERDRRDNRERDQR) the composition is skewed to basic and acidic residues. S643 bears the Phosphoserine mark. Residues 645–789 (IRHQGRNDEL…RDKERERQRD (145 aa)) adopt a coiled-coil conformation. The span at 649-821 (GRNDELERDE…NPRDGHDERK (173 aa)) shows a compositional bias: basic and acidic residues. 9 positions are modified to phosphoserine: S831, S833, S837, S845, S848, S853, S873, S875, and S877. Over residues 881–957 (LTEDRQGRWK…TSDRAHDENK (77 aa)) the composition is skewed to basic and acidic residues. T882 carries the post-translational modification Phosphothreonine. Residue S943 is modified to Phosphoserine. Positions 958 to 969 (KKAKIQKKPIKK) are enriched in basic residues. Residues 970–981 (KKEDDVGIERGN) show a composition bias toward basic and acidic residues. Residues S986, S993, S1010, S1014, and S1017 each carry the phosphoserine modification. The span at 996-1010 (KGQKKKSIEKKRKKS) shows a compositional bias: basic residues. T1033 carries the post-translational modification Phosphothreonine. Residues 1073–1083 (PDRTEVTEAEH) are compositionally biased toward basic and acidic residues. 2 stretches are compositionally biased toward low complexity: residues 1084-1100 (TATA…LSSL) and 1125-1153 (AAAT…TFAN). Residues 1163–1188 (TRVEKVETPHVTIEDAQHRKPMDQKR) show a composition bias toward basic and acidic residues. T1170 is subject to Phosphothreonine. S1191, S1194, S1208, and S1210 each carry phosphoserine. The segment covering 1213–1223 (SAHRSGDDQSG) has biased composition (basic and acidic residues). Position 1230 is a phosphoserine (S1230). Composition is skewed to basic and acidic residues over residues 1231–1286 (GSRD…DRQV) and 1294–1379 (DSRD…DRTF). Residues 1300–1366 (QERDRYEHDR…RERERLISDS (67 aa)) adopt a coiled-coil conformation. Phosphoserine is present on residues S1364, S1366, S1382, S1386, S1406, S1409, S1438, L1453, G1456, S1465, and D1466. Basic and acidic residues-rich tracts occupy residues 1386–1421 (SVKR…DKDL) and 1429–1438 (ETNKSERTES).

Belongs to the ZC3H13 family. As to quaternary structure, component of the WMM complex, a N6-methyltransferase complex composed of a catalytic subcomplex, named MAC, and of an associated subcomplex, named MACOM. The MAC subcomplex is composed of METTL3 and METTL14. The MACOM subcomplex is composed of WTAP, ZC3H13, CBLL1/HAKAI, VIRMA, and, in some cases of RBM15 (RBM15 or RBM15B). Also a component of a MACOM-like complex, named WTAP complex, composed of WTAP, ZC3H13, CBLL1/HAKAI, VIRMA, RBM15, BCLAF1 and THRAP3.

The protein resides in the nucleus speckle. It localises to the nucleus. The protein localises to the nucleoplasm. Associated component of the WMM complex, a complex that mediates N6-methyladenosine (m6A) methylation of RNAs, a modification that plays a role in the efficiency of mRNA splicing and RNA processing. Acts as a key regulator of m6A methylation by promoting m6A methylation of mRNAs at the 3'-UTR. Controls embryonic stem cells (ESCs) pluripotency via its role in m6A methylation. In the WMM complex, anchors component of the MACOM subcomplex in the nucleus. Also required for bridging WTAP to the RNA-binding component RBM15 (RBM15 or RBM15B). The polypeptide is Zinc finger CCCH domain-containing protein 13 (Homo sapiens (Human)).